Here is an 85-residue protein sequence, read N- to C-terminus: Defensin-like protein 112 (85 aa).

The first 24 residues, 1–24, serve as a signal peptide directing secretion; it reads MAISKKMLTTFVLTILLAVSFVHC. 4 disulfide bridges follow: C40-C80, C46-C71, C56-C78, and C60-C79.

Belongs to the DEFL family.

The protein resides in the secreted. This Arabidopsis thaliana (Mouse-ear cress) protein is Defensin-like protein 112.